Consider the following 436-residue polypeptide: Glutamyl-tRNA reductase 2 (436 aa).

Substrate-binding positions include 49 to 52 (TCNR), serine 106, 111 to 113 (EPQ), and glutamine 117. Catalysis depends on cysteine 50, which acts as the Nucleophile. 186–191 (GAGKMC) provides a ligand contact to NADP(+).

This sequence belongs to the glutamyl-tRNA reductase family. In terms of assembly, homodimer.

It carries out the reaction (S)-4-amino-5-oxopentanoate + tRNA(Glu) + NADP(+) = L-glutamyl-tRNA(Glu) + NADPH + H(+). It functions in the pathway porphyrin-containing compound metabolism; protoporphyrin-IX biosynthesis; 5-aminolevulinate from L-glutamyl-tRNA(Glu): step 1/2. In terms of biological role, catalyzes the NADPH-dependent reduction of glutamyl-tRNA(Glu) to glutamate 1-semialdehyde (GSA). This is Glutamyl-tRNA reductase 2 from Koribacter versatilis (strain Ellin345).